A 71-amino-acid polypeptide reads, in one-letter code: Protein bdm (71 aa).

The polypeptide is Protein bdm (bdm) (Escherichia coli (strain K12)).